Reading from the N-terminus, the 208-residue chain is Ribosomal RNA small subunit methyltransferase G (208 aa).

Residues glycine 78, phenylalanine 83, 101–103 (ERS), 129–130 (IE), and arginine 142 each bind S-adenosyl-L-methionine.

It belongs to the methyltransferase superfamily. RNA methyltransferase RsmG family.

It localises to the cytoplasm. Specifically methylates the N7 position of a guanine in 16S rRNA. This is Ribosomal RNA small subunit methyltransferase G from Borreliella burgdorferi (strain ZS7) (Borrelia burgdorferi).